Reading from the N-terminus, the 141-residue chain is Hemoglobin subunit alpha (141 aa).

A Globin domain is found at 1–141 (VLSGTDKTNV…VGLVLTAKYR (141 aa)). Position 58 (His-58) interacts with O2. His-87 provides a ligand contact to heme b.

Belongs to the globin family. Heterotetramer of two alpha chains and two beta chains. Red blood cells.

Its function is as follows. Involved in oxygen transport from the lung to the various peripheral tissues. The polypeptide is Hemoglobin subunit alpha (HBA) (Psittacula krameri (Rose-ringed parakeet)).